Consider the following 605-residue polypeptide: DNA primase (605 aa).

A CHC2-type zinc finger spans residues 38-62; sequence CPFHDEKTPSFTVSEDKQICHCFGC. The Toprim domain maps to 260 to 341; the sequence is DEIVLLEGFM…NVFVIQLPSG (82 aa). Residues Glu-266, Asp-310, and Asp-312 each coordinate Mg(2+).

Belongs to the DnaG primase family. As to quaternary structure, monomer. Interacts with DnaB. Requires Zn(2+) as cofactor. Mg(2+) is required as a cofactor.

The enzyme catalyses ssDNA + n NTP = ssDNA/pppN(pN)n-1 hybrid + (n-1) diphosphate.. Its function is as follows. RNA polymerase that catalyzes the synthesis of short RNA molecules used as primers for DNA polymerase during DNA replication. The chain is DNA primase from Staphylococcus aureus (strain MSSA476).